The primary structure comprises 144 residues: D-aminoacyl-tRNA deacylase (144 aa).

The short motif at 136-137 (GP) is the Gly-cisPro motif, important for rejection of L-amino acids element.

The protein belongs to the DTD family. In terms of assembly, homodimer.

It is found in the cytoplasm. It catalyses the reaction glycyl-tRNA(Ala) + H2O = tRNA(Ala) + glycine + H(+). The catalysed reaction is a D-aminoacyl-tRNA + H2O = a tRNA + a D-alpha-amino acid + H(+). An aminoacyl-tRNA editing enzyme that deacylates mischarged D-aminoacyl-tRNAs. Also deacylates mischarged glycyl-tRNA(Ala), protecting cells against glycine mischarging by AlaRS. Acts via tRNA-based rather than protein-based catalysis; rejects L-amino acids rather than detecting D-amino acids in the active site. By recycling D-aminoacyl-tRNA to D-amino acids and free tRNA molecules, this enzyme counteracts the toxicity associated with the formation of D-aminoacyl-tRNA entities in vivo and helps enforce protein L-homochirality. The protein is D-aminoacyl-tRNA deacylase of Actinobacillus pleuropneumoniae serotype 5b (strain L20).